The following is a 1047-amino-acid chain: MALPSLLLLVAALAGGVRPPGARNLTLAVVLPEHNLSYAWAWPRVGPAVALAVEALGRALPVDLRFVSSELEGACSEYLAPLSAVDLKLYHDPDLLLGPGCVYPAASVARFASHWRLPLLTAGAVASGFSAKNDHYRTLVRTGPSAPKLGEFVVTLHGHFNWTARAALLYLDARTDDRPHYFTIEGVFEALQGSNLSVQHQVYAREPGGPEQATHFIRANGRIVYICGPLEMLHEILLQAQRENLTNGDYVFFYLDVFGESLRAGPTRATGRPWQDNRTREQAQALREAFQTVLVITYREPPNPEYQEFQNRLLIRAREDFGVELGPSLMNLIAGCFYDGILLYAEVLNETIQEGGTREDGLRIVEKMQGRRYHGVTGLVVMDKNNDRETDFVLWAMGDLDSGDFQPAAHYSGAEKQIWWTGRPIPWVKGAPPSDNPPCAFDLDDPSCDKTPLSTLAIVALGTGITFIMFGVSSFLIFRKLMLEKELASMLWRIRWEELQFGNSERYHKGAGSRLTLSLRGSSYGSLMTAHGKYQIFANTGHFKGNVVAIKHVNKKRIELTRQVLFELKHMRDVQFNHLTRFIGACIDPPNICIVTEYCPRGSLQDILENDSINLDWMFRYSLINDLVKGMAFLHNSIISSHGSLKSSNCVVDSRFVLKITDYGLASFRSTAEPDDSHALYAKKLWTAPELLSGNPLPTTGMQKADVYSFGIILQEIALRSGPFYLEGLDLSPKEIVQKVRNGQRPYFRPSIDRTQLNEELVLLMERCWAQDPAERPDFGQIKGFIRRFNKEGGTSILDNLLLRMEQYANNLEKLVEERTQAYLEEKRKAEALLYQILPHSVAEQLKRGETVQAEAFDSVTIYFSDIVGFTALSAESTPMQVVTLLNDLYTCFDAIIDNFDVYKVETIGDAYMVVSGLPGRNGQRHAPEIARMALALLDAVSSFRIRHRPHDQLRLRIGVHTGPVCAGVVGLKMPRYCLFGDTVNTASRMESNGQALKIHVSSTTKDALDELGCFQLELRGDVEMKGKGKMRTYWLLGERKGPPGLL.

The N-terminal stretch at 1 to 22 (MALPSLLLLVAALAGGVRPPGA) is a signal peptide. Topologically, residues 23–458 (RNLTLAVVLP…DKTPLSTLAI (436 aa)) are extracellular. Residues asparagine 24 and asparagine 35 are each glycosylated (N-linked (GlcNAc...) asparagine). Cysteine 75 and cysteine 101 are joined by a disulfide. N-linked (GlcNAc...) asparagine glycans are attached at residues asparagine 161, asparagine 195, asparagine 244, asparagine 277, and asparagine 349. The helical transmembrane segment at 459 to 478 (VALGTGITFIMFGVSSFLIF) threads the bilayer. At 479–1047 (RKLMLEKELA…GERKGPPGLL (569 aa)) the chain is on the cytoplasmic side. Serine 513 carries the post-translational modification Phosphoserine. The 274-residue stretch at 513 to 786 (SRLTLSLRGS…PDFGQIKGFI (274 aa)) folds into the Protein kinase domain. Position 516 is a phosphothreonine (threonine 516). 4 positions are modified to phosphoserine: serine 518, serine 522, serine 523, and serine 526. The residue at position 529 (threonine 529) is a Phosphothreonine. The Guanylate cyclase domain maps to 861–991 (TIYFSDIVGF…DTVNTASRME (131 aa)).

It belongs to the adenylyl cyclase class-4/guanylyl cyclase family. Post-translationally, phosphorylated. Phosphorylation of the protein kinase-like domain is required for full activation by CNP. In terms of processing, glycosylated.

Its subcellular location is the cell membrane. It catalyses the reaction GTP = 3',5'-cyclic GMP + diphosphate. Functionally, receptor for the C-type natriuretic peptide NPPC/CNP hormone. Has guanylate cyclase activity upon binding of its ligand. May play a role in the regulation of skeletal growth. The sequence is that of Atrial natriuretic peptide receptor 2 (NPR2) from Homo sapiens (Human).